Consider the following 327-residue polypeptide: Microtubule-associated protein RP/EB family member 2 (327 aa).

Over residues 1–17 the composition is skewed to polar residues; it reads MPGPTQTLSPNGENNND. A disordered region spans residues 1–20; sequence MPGPTQTLSPNGENNNDVIH. Residues 56-158 form the Calponin-homology (CH) domain; that stretch reads TMSRHDIIAW…FIQWFKKFFD (103 aa). Disordered stretches follow at residues 170–238 and 295–327; these read EARQ…DKDL and LYSS…QEEY. The region spanning 234 to 304 is the EB1 C-terminal domain; the sequence is SDKDLETQVS…LYSSEEQESH (71 aa).

Belongs to the MAPRE family.

The protein resides in the cytoplasm. It localises to the cytoskeleton. May be involved in microtubule polymerization, and spindle function by stabilizing microtubules and anchoring them at centrosomes. The polypeptide is Microtubule-associated protein RP/EB family member 2 (mapre2) (Xenopus laevis (African clawed frog)).